The following is a 308-amino-acid chain: Tetraacyldisaccharide 4'-kinase (308 aa).

63-70 (SFGGNGKT) contributes to the ATP binding site.

Belongs to the LpxK family.

It carries out the reaction a lipid A disaccharide + ATP = a lipid IVA + ADP + H(+). The protein operates within glycolipid biosynthesis; lipid IV(A) biosynthesis; lipid IV(A) from (3R)-3-hydroxytetradecanoyl-[acyl-carrier-protein] and UDP-N-acetyl-alpha-D-glucosamine: step 6/6. Functionally, transfers the gamma-phosphate of ATP to the 4'-position of a tetraacyldisaccharide 1-phosphate intermediate (termed DS-1-P) to form tetraacyldisaccharide 1,4'-bis-phosphate (lipid IVA). This is Tetraacyldisaccharide 4'-kinase from Campylobacter jejuni subsp. jejuni serotype O:23/36 (strain 81-176).